A 129-amino-acid polypeptide reads, in one-letter code: MEKYQSKARFAPLSDAPFALRGALGSSNSSFNNIDHLRQSSSSGQARSYTSSPLGALRPKMFPSGNRLLHTSRPLSAPVANRPLSPHLPLKKPQLSATFSISHRIFGAALGAVIISIPLATKFSLMFDV.

Residues 1 to 58 (MEKYQSKARFAPLSDAPFALRGALGSSNSSFNNIDHLRQSSSSGQARSYTSSPLGALR) constitute a mitochondrion transit peptide. Residues 27-53 (SNSSFNNIDHLRQSSSSGQARSYTSSP) show a composition bias toward polar residues. Positions 27–66 (SNSSFNNIDHLRQSSSSGQARSYTSSPLGALRPKMFPSGN) are disordered. Residue His-87 coordinates heme. Residues 105 to 127 (IFGAALGAVIISIPLATKFSLMF) traverse the membrane as a helical segment.

Component of complex II composed of eight subunits in plants: four classical SDH subunits SDH1, SDH2, SDH3 and SDH4 (a flavoprotein (FP), an iron-sulfur protein (IP), and a cytochrome b composed of a large and a small subunit.), as well as four subunits unknown in mitochondria from bacteria and heterotrophic eukaryotes. Requires heme as cofactor.

The protein resides in the mitochondrion inner membrane. It participates in carbohydrate metabolism; tricarboxylic acid cycle. Functionally, membrane-anchoring subunit of succinate dehydrogenase (SDH). In Oryza sativa subsp. japonica (Rice), this protein is Succinate dehydrogenase subunit 3-2, mitochondrial.